Consider the following 300-residue polypeptide: Ribonuclease Z (300 aa).

Zn(2+) is bound by residues H63, H65, D67, H68, H140, D207, and H265. Residue D67 is the Proton acceptor of the active site.

Belongs to the RNase Z family. As to quaternary structure, homodimer. The cofactor is Zn(2+).

The catalysed reaction is Endonucleolytic cleavage of RNA, removing extra 3' nucleotides from tRNA precursor, generating 3' termini of tRNAs. A 3'-hydroxy group is left at the tRNA terminus and a 5'-phosphoryl group is left at the trailer molecule.. Its function is as follows. Zinc phosphodiesterase, which displays some tRNA 3'-processing endonuclease activity. Probably involved in tRNA maturation, by removing a 3'-trailer from precursor tRNA. This chain is Ribonuclease Z, found in Ignicoccus hospitalis (strain KIN4/I / DSM 18386 / JCM 14125).